A 195-amino-acid chain; its full sequence is Probable GTP-binding protein EngB (195 aa).

In terms of domain architecture, EngB-type G spans 22 to 194; it reads LKGEVAFVGR…LDLISTLLKE (173 aa). Residues 30–37, 56–60, 74–77, 141–144, and 173–175 each bind GTP; these read GRSNVGKS, GKTRS, DLPG, TKMD, and TSS. Residues Ser37 and Thr58 each coordinate Mg(2+).

Belongs to the TRAFAC class TrmE-Era-EngA-EngB-Septin-like GTPase superfamily. EngB GTPase family. The cofactor is Mg(2+).

Necessary for normal cell division and for the maintenance of normal septation. The polypeptide is Probable GTP-binding protein EngB (Thermotoga petrophila (strain ATCC BAA-488 / DSM 13995 / JCM 10881 / RKU-1)).